Consider the following 500-residue polypeptide: Melanopsin-like (500 aa).

The Extracellular portion of the chain corresponds to 1 to 65 (MSHHSSWRGH…TVDVPDHAHY (65 aa)). N-linked (GlcNAc...) asparagine glycosylation is present at N18. A helical membrane pass occupies residues 66-86 (IIGSVILIVGITGVIGNALVV). Residues 87-101 (YVFCRSRTLRTAGNM) are Cytoplasmic-facing. Residues 102–122 (FIVNLAVADFLMSVTQSPVFF) traverse the membrane as a helical segment. At 123-138 (AASLHRRWVFGERPCE) the chain is on the extracellular side. C137 and C215 are joined by a disulfide. A helical membrane pass occupies residues 139 to 159 (LYAFCGALFGICSMMTLTAIA). The Cytoplasmic segment spans residues 160–182 (ADRCLAITQPLALVSRVSRRKAG). The chain crosses the membrane as a helical span at residues 183–203 (AVLVVVWLYSLGWSLPPFFGW). The Extracellular portion of the chain corresponds to 204–232 (SAYVPEGLQTSCSWDYMTFTPSVRAYTIL). The helical transmembrane segment at 233-253 (LFVFVFFIPLGIIGSCYFAIF) threads the bilayer. Over 254–286 (QTIRAAGKEIRELDCGETHKVYERMQNEWKMAK) the chain is Cytoplasmic. The helical transmembrane segment at 287–307 (VALVVIVLFIISWSPYSVVAL) threads the bilayer. Residues 308 to 322 (TATAGYSHFLTPYMN) are Extracellular-facing. A helical transmembrane segment spans residues 323-343 (SVPAVIAKASAIHNPIIYAIT). An N6-(retinylidene)lysine modification is found at K330. Residues 344–500 (HPKYRVAIAR…SDGKALLGGN (157 aa)) are Cytoplasmic-facing. Residues 404–428 (RWGKTRLSSASDSDSCWTESEADGS) are disordered. Polar residues predominate over residues 409-428 (RLSSASDSDSCWTESEADGS).

The protein belongs to the G-protein coupled receptor 1 family. Opsin subfamily. Expressed in a subset of retinal horizontal cells.

It localises to the cell membrane. Its function is as follows. Photoreceptor implicated in non-image-forming responses to light. The chain is Melanopsin-like (opn4l) from Danio rerio (Zebrafish).